Reading from the N-terminus, the 709-residue chain is ATP-dependent RNA helicase dbp7 (709 aa).

Residues 13–90 (DNAQSRKPEA…KPAHELKGNK (78 aa)) are disordered. Basic and acidic residues predominate over residues 16–34 (QSRKPEALKSSRRWTDRAR). The span at 44-65 (NESSKSTVKRNSGTNGASTDYK) shows a compositional bias: polar residues. Over residues 66-90 (NSQKEKVINPVFDPRKPAHELKGNK) the composition is skewed to basic and acidic residues. Residues 138–167 (TNFAGVQLDTQLADHLNNKMNISAPTAIQS) carry the Q motif motif. The Helicase ATP-binding domain occupies 172-366 (ALLNTDDKDA…DSALKDALYL (195 aa)). Position 185-192 (185-192 (AQTGSGKT)) interacts with ATP. The DEAD box motif lies at 301 to 304 (DEGD). In terms of domain architecture, Helicase C-terminal spans 404–580 (LLRSHVRSYK…EQPNGPSGLL (177 aa)). Positions 662–690 (GKISGANSSKPRKQGGSVDKGKSKSSKDI) are disordered.

This sequence belongs to the DEAD box helicase family. DDX31/DBP7 subfamily.

Its subcellular location is the nucleus. The protein resides in the nucleolus. It catalyses the reaction ATP + H2O = ADP + phosphate + H(+). In terms of biological role, ATP-binding RNA helicase involved in the biogenesis of 60S ribosomal subunits and is required for the normal formation of 25S and 5.8S rRNAs. The protein is ATP-dependent RNA helicase dbp7 (dbp7) of Schizosaccharomyces pombe (strain 972 / ATCC 24843) (Fission yeast).